The chain runs to 564 residues: Dihydroxy-acid dehydratase (564 aa).

Residues 1-10 (MTDTRTKRRM) are compositionally biased toward basic residues. A disordered region spans residues 1–23 (MTDTRTKRRMNWNSHHITQGDER). A [2Fe-2S] cluster-binding site is contributed by Cys57. Asp89 contributes to the Mg(2+) binding site. A [2Fe-2S] cluster-binding site is contributed by Cys130. Mg(2+) contacts are provided by Asp131 and Lys132. An N6-carboxylysine modification is found at Lys132. Cys202 contributes to the [2Fe-2S] cluster binding site. Glu454 is a Mg(2+) binding site. Catalysis depends on Ser480, which acts as the Proton acceptor.

The protein belongs to the IlvD/Edd family. In terms of assembly, homodimer. [2Fe-2S] cluster is required as a cofactor. Requires Mg(2+) as cofactor.

It catalyses the reaction (2R)-2,3-dihydroxy-3-methylbutanoate = 3-methyl-2-oxobutanoate + H2O. The catalysed reaction is (2R,3R)-2,3-dihydroxy-3-methylpentanoate = (S)-3-methyl-2-oxopentanoate + H2O. Its pathway is amino-acid biosynthesis; L-isoleucine biosynthesis; L-isoleucine from 2-oxobutanoate: step 3/4. It participates in amino-acid biosynthesis; L-valine biosynthesis; L-valine from pyruvate: step 3/4. Functionally, functions in the biosynthesis of branched-chain amino acids. Catalyzes the dehydration of (2R,3R)-2,3-dihydroxy-3-methylpentanoate (2,3-dihydroxy-3-methylvalerate) into 2-oxo-3-methylpentanoate (2-oxo-3-methylvalerate) and of (2R)-2,3-dihydroxy-3-methylbutanoate (2,3-dihydroxyisovalerate) into 2-oxo-3-methylbutanoate (2-oxoisovalerate), the penultimate precursor to L-isoleucine and L-valine, respectively. The polypeptide is Dihydroxy-acid dehydratase (Deinococcus geothermalis (strain DSM 11300 / CIP 105573 / AG-3a)).